The chain runs to 3365 residues: Probable serine/threonine-protein kinase roco9 (3365 aa).

Disordered stretches follow at residues 1-177, 397-497, 944-985, 1044-1098, and 1261-1301; these read MTSI…KSSK, ESTE…QPPQ, PIKK…GFLS, IHQQ…NNKI, and QNNL…ISKG. The segment covering 8–27 has biased composition (basic and acidic residues); sequence FDKKSKRSNEDTGEKEETKK. Composition is skewed to low complexity over residues 51 to 84, 100 to 116, 137 to 169, and 397 to 415; these read LQQL…SLNT, STNS…STRS, SQTS…TVKT, and ESTE…TLEP. The Rho-GAP domain maps to 243–437; it reads TPLYSLIKRQ…RLPQQSSDDN (195 aa). Polar residues predominate over residues 421-434; that stretch reads PLSTSTQRLPQQSS. Composition is skewed to low complexity over residues 435–445, 457–489, 959–974, 1044–1096, and 1262–1301; these read DDNSNNDNNNK, NNDN…QPKQ, SSPL…IPSK, IHQQ…NNNN, and NNLN…ISKG. Positions 804–1484 constitute a Myotubularin phosphatase domain; that stretch reads IWDIYSPLIE…DQIILWSSFF (681 aa). 16 LRR repeats span residues 1510–1526, 1527–1549, 1550–1572, 1576–1599, 1600–1622, 1624–1645, 1646–1668, 1670–1691, 1697–1720, 1722–1743, 1744–1770, 1772–1789, 1790–1812, 1814–1835, 1837–1861, and 1863–1887; these read SQKL…LSYF, STLT…IILL, SNLT…LLKL, KLKL…IYTL, STLT…ISKM, QLKC…LSLC, VGLE…FFKL, SLRM…KLDD, MNEI…MFEM, SLIH…LLDN, LVNL…LFKL, VLDL…HAML, PSLK…DFNL, LLSE…IGTK, LSLT…ALLK, and LKSL…DAIL. Basic and acidic residues predominate over residues 1932–1947; it reads SKEREKEKEKEKEKEK. 4 disordered regions span residues 1932–1963, 2190–2389, 2507–2567, and 2674–2704; these read SKER…DKDK, NNNN…NNGS, APST…LQTP, and SNQQ…TSIN. Low complexity-rich tracts occupy residues 2190–2205, 2216–2389, 2522–2567, and 2676–2688; these read NNNN…NNNN, SINN…NNGS, NNTS…LQTP, and QQQQ…STQH. The Protein kinase domain maps to 3008–3269; sequence ELDPNPIGEG…KKLEEIELIL (262 aa). ATP-binding positions include 3014 to 3022 and K3035; that span reads IGEGGTATV. D3132 (proton acceptor) is an active-site residue. Low complexity predominate over residues 3311–3333; sequence QQQKQQQLQQQKQSPKQLQQQKP. The tract at residues 3311 to 3365 is disordered; sequence QQQKQQQLQQQKQSPKQLQQQKPLPTPPKQLSNNDSTPTKPLDDSSDSSSEDSNN. Acidic residues predominate over residues 3354–3365; it reads DSSDSSSEDSNN.

It belongs to the protein kinase superfamily. TKL Ser/Thr protein kinase family. ROCO subfamily.

It carries out the reaction L-seryl-[protein] + ATP = O-phospho-L-seryl-[protein] + ADP + H(+). The catalysed reaction is L-threonyl-[protein] + ATP = O-phospho-L-threonyl-[protein] + ADP + H(+). The polypeptide is Probable serine/threonine-protein kinase roco9 (roco9) (Dictyostelium discoideum (Social amoeba)).